The primary structure comprises 258 residues: Acyl-[acyl-carrier-protein]--UDP-N-acetylglucosamine O-acyltransferase (258 aa).

The protein belongs to the transferase hexapeptide repeat family. LpxA subfamily. As to quaternary structure, homotrimer.

The protein resides in the cytoplasm. The catalysed reaction is a (3R)-hydroxyacyl-[ACP] + UDP-N-acetyl-alpha-D-glucosamine = a UDP-3-O-[(3R)-3-hydroxyacyl]-N-acetyl-alpha-D-glucosamine + holo-[ACP]. Its pathway is glycolipid biosynthesis; lipid IV(A) biosynthesis; lipid IV(A) from (3R)-3-hydroxytetradecanoyl-[acyl-carrier-protein] and UDP-N-acetyl-alpha-D-glucosamine: step 1/6. Involved in the biosynthesis of lipid A, a phosphorylated glycolipid that anchors the lipopolysaccharide to the outer membrane of the cell. The protein is Acyl-[acyl-carrier-protein]--UDP-N-acetylglucosamine O-acyltransferase of Pseudomonas entomophila (strain L48).